The sequence spans 638 residues: Growth hormone receptor (638 aa).

A signal peptide spans 1-18; that stretch reads MDLWQLLLTLALAGSSDA. Over 19 to 264 the chain is Extracellular; the sequence is FSGSEPTAAI…NQFTCEEDFY (246 aa). Asn-46 is a glycosylation site (N-linked (GlcNAc...) asparagine). Disulfide bonds link Cys-56-Cys-66 and Cys-101-Cys-112. An N-linked (GlcNAc...) asparagine glycan is attached at Asn-115. Cysteines 126 and 140 form a disulfide. Residues 151–254 form the Fibronectin type-III domain; sequence PPIALNWTLL…EVLYVTLPQM (104 aa). Residues Asn-156, Asn-161, and Asn-200 are each glycosylated (N-linked (GlcNAc...) asparagine). Residues 240-244 carry the WSXWS motif motif; the sequence is YGEFS. Residues 265–288 form a helical membrane-spanning segment; sequence FPWLLIIIFGIFGLTVMLFVFLFS. The Cytoplasmic portion of the chain corresponds to 289–638; that stretch reads KQQRIKMLIL…STDQLNKIMP (350 aa). Residues 294–379 form a required for JAK2 binding region; sequence KMLILPPVPV…HQKSHSNLGV (86 aa). The Box 1 motif motif lies at 297–305; it reads ILPPVPVPK. The UbE motif signature appears at 340–349; it reads DSWVEFIELD. Phosphoserine is present on Ser-341. A disordered region spans residues 353 to 388; that stretch reads PDEKNEGSDTDRLLSSDHQKSHSNLGVKDGDSGRTS. A compositionally biased stretch (basic and acidic residues) spans 356–372; the sequence is KNEGSDTDRLLSSDHQK. 2 positions are modified to phosphotyrosine: Tyr-487 and Tyr-595.

It belongs to the type I cytokine receptor family. Type 1 subfamily. In terms of assembly, on growth hormone (GH) binding, forms homodimers and binds JAK2 via a box 1-containing domain. In terms of processing, the soluble form (GHBP) is produced by phorbol ester-promoted proteolytic cleavage at the cell surface (shedding) by ADAM17/TACE. Shedding is inhibited by growth hormone (GH) binding to the receptor probably due to a conformational change in GHR rendering the receptor inaccessible to ADAM17. On GH binding, phosphorylated on tyrosine residues in the cytoplasmic domain by JAK2. Post-translationally, ubiquitinated by the ECS(SOCS2) complex following ligand-binding and phosphorylation by JAK2, leading to its degradation by the proteasome. Regulation by the ECS(SOCS2) complex acts as a negative feedback loop of growth hormone receptor signaling. Ubiquitination is not sufficient for GHR internalization.

Its subcellular location is the cell membrane. It is found in the secreted. Its function is as follows. Receptor for pituitary gland growth hormone (GH1) involved in regulating postnatal body growth. On ligand binding, couples to the JAK2/STAT5 pathway. Functionally, the soluble form (GHBP) acts as a reservoir of growth hormone in plasma and may be a modulator/inhibitor of GH signaling. This is Growth hormone receptor (GHR) from Papio anubis (Olive baboon).